The primary structure comprises 561 residues: Tetracenomycin A2 monooxygenase-dioxygenase (561 aa).

Residues leucine 15, glutamate 35, glutamine 128, and methionine 152 each contribute to the FAD site. Residue tyrosine 231 is the Proton acceptor of the active site. Aspartate 322 provides a ligand contact to FAD.

Belongs to the PheA/TfdB FAD monooxygenase family. As to quaternary structure, monomer. May form oligomers up to homohexamers. The cofactor is FAD.

It catalyses the reaction tetracenomycin A2 + 2 NADPH + 2 O2 + 2 H(+) = tetracenomycin C + 2 NADP(+) + H2O. The protein operates within antibiotic biosynthesis; tetracenomycin C biosynthesis. Functionally, involved in the biosynthesis of tetracenomycin C (TCM C). Catalyzes the triple hydroxylation of tetracenomycin A2 (TCM A2) at positions C-4, C-4a and C-12a to give tetracenomycin C (TCM C). Can use either NADH or NADPH as electron donors, but prefers NADPH under physiological conditions. In Streptomyces glaucescens, this protein is Tetracenomycin A2 monooxygenase-dioxygenase.